We begin with the raw amino-acid sequence, 333 residues long: HTH-type transcriptional regulator Cphy_2742 (333 aa).

Residues 1–55 (MNIYDVSQKAGVSIATVSRVINGNPNVSEKTKQKVLDVMKEIGYTPNVFARGLGL) enclose the HTH lacI-type domain. A DNA-binding region (H-T-H motif) is located at residues 3-22 (IYDVSQKAGVSIATVSRVIN).

It localises to the cytoplasm. In terms of biological role, involved in control of pectin and galacturonic acid metabolism. Probably represses a comprehensive set of pectin fermentation genes by binding a conserved palindrome at or downstream of their transcription start site to block transcription. In the presence of galacturonic acid may activate transcription of acetate synthesis and other aspects of carbon metabolism. This is HTH-type transcriptional regulator Cphy_2742 from Lachnoclostridium phytofermentans (strain ATCC 700394 / DSM 18823 / ISDg) (Clostridium phytofermentans).